The sequence spans 147 residues: Hemoglobin subunit beta (147 aa).

An N-acetylvaline modification is found at Val2. Positions His3–His147 constitute a Globin domain. The residue at position 13 (Thr13) is a Phosphothreonine. A Phosphoserine modification is found at Ser45. At Lys60 the chain carries N6-acetyllysine. His64 contributes to the heme b binding site. Lys83 is modified (N6-acetyllysine). His93 contributes to the heme b binding site. Cys94 carries the post-translational modification S-nitrosocysteine. Lys145 is subject to N6-acetyllysine.

This sequence belongs to the globin family. In terms of assembly, heterotetramer of two alpha chains and two beta chains. In terms of tissue distribution, red blood cells.

Functionally, involved in oxygen transport from the lung to the various peripheral tissues. The polypeptide is Hemoglobin subunit beta (HBB) (Colobus polykomos (Western black-and-white colobus monkey)).